The chain runs to 255 residues: tRNA (guanine-N(1)-)-methyltransferase (255 aa).

S-adenosyl-L-methionine-binding positions include Gly119 and 139-144 (IGDFIL).

Belongs to the RNA methyltransferase TrmD family. In terms of assembly, homodimer.

It localises to the cytoplasm. The enzyme catalyses guanosine(37) in tRNA + S-adenosyl-L-methionine = N(1)-methylguanosine(37) in tRNA + S-adenosyl-L-homocysteine + H(+). Specifically methylates guanosine-37 in various tRNAs. The protein is tRNA (guanine-N(1)-)-methyltransferase of Pseudoalteromonas translucida (strain TAC 125).